The following is a 193-amino-acid chain: MSGIRLIVGLGNPGPEYEKTRHNAGFWLVDELCWQFKGNWRSEGKFHGDVARIQIEGQDVWLLKPMTYMNLSGQAVLALAHFYKILPDEILVVHDELDLAPGVARFKQGGGHGGHNGLKDIAARLSSPAFWRLRLGIGHPGDKKEVANFVLKKPRAEEQQALDEAVLASLRELPRAVSGKMAEAMKALHTEAK.

A tRNA-binding site is contributed by Y17. H22 serves as the catalytic Proton acceptor. TRNA is bound by residues Y68, N70, and N116.

It belongs to the PTH family. Monomer.

It is found in the cytoplasm. The enzyme catalyses an N-acyl-L-alpha-aminoacyl-tRNA + H2O = an N-acyl-L-amino acid + a tRNA + H(+). Its function is as follows. Hydrolyzes ribosome-free peptidyl-tRNAs (with 1 or more amino acids incorporated), which drop off the ribosome during protein synthesis, or as a result of ribosome stalling. Catalyzes the release of premature peptidyl moieties from peptidyl-tRNA molecules trapped in stalled 50S ribosomal subunits, and thus maintains levels of free tRNAs and 50S ribosomes. The polypeptide is Peptidyl-tRNA hydrolase (Chromobacterium violaceum (strain ATCC 12472 / DSM 30191 / JCM 1249 / CCUG 213 / NBRC 12614 / NCIMB 9131 / NCTC 9757 / MK)).